A 322-amino-acid chain; its full sequence is MSKIVRVGAVQSEPVWLDLEGSVDKTISLIEKAAADGVNVLGFPEVWIPGYPWSMWTSAVINNSHIIHDYMNNSMRKDSPQMKRIQAAVKEAGMVVVLGYSERDGASLYMAQSFIDPSGEIVHHRRKIKPTHIERTIWGEGQAESLTCVIDSPFGKVGGLNCWEHLQPLLRYYEYSQGVQIHIASWPAEFEMPDPKKIAWLYHETGEASYRASQFFAIEGQAFVLVASQILTEANVERNNLTGNPVTKTPGGGFSMIFGPDGKPLCEPVDAGAEAILTADIDLRDIDKPKAFIDVVGHYARPDLLSLLVNPTVDKHVTTMKK.

Residues 5–283 form the CN hydrolase domain; that stretch reads VRVGAVQSEP…EAILTADIDL (279 aa). Glutamate 45 functions as the Proton acceptor in the catalytic mechanism. Lysine 127 is an active-site residue. The active-site Nucleophile is cysteine 162.

It belongs to the carbon-nitrogen hydrolase superfamily. Nitrilase family.

The catalysed reaction is a nitrile + 2 H2O = a carboxylate + NH4(+). In terms of biological role, nitrilase that hydrolyzes preferentially 4-cyanopyridine. The chain is Nitrilase from Talaromyces marneffei (strain ATCC 18224 / CBS 334.59 / QM 7333) (Penicillium marneffei).